The primary structure comprises 154 residues: MGSLSGLRLAAGSCFRLCERDVFSSLRLTRSSDLKRINGFCTKPQESPRAPSRTYNRVPLHKPTEWQKKILVWSGRFKKEDEIPETVSLEMLDTAKNKMRVKISYLMIALTVVGCICMVIEGKKAAQRHESLTSLNLEKKARLREEAAMKAKTE.

The interval 76–102 (RFKKEDEIPETVSLEMLDTAKNKMRVK) is required for proapoptotic activity. A helical transmembrane segment spans residues 103–120 (ISYLMIALTVVGCICMVI).

Belongs to the UPF0389 family. In terms of assembly, interacts with HSP90AB1; HSP90AB1 is essential for FAM162A mitochondrial localization and pro-apoptotic activity. Interacts with VDAC2; the interaction is probably involved in inducing mitochondrial permeability transition.

The protein localises to the mitochondrion membrane. Proposed to be involved in regulation of apoptosis; the exact mechanism may differ between cell types/tissues. May be involved in hypoxia-induced cell death of transformed cells implicating cytochrome C release and caspase activation (such as CASP9) and inducing mitochondrial permeability transition. May be involved in hypoxia-induced cell death of neuronal cells probably by promoting release of AIFM1 from mitochondria to cytoplasm and its translocation to the nucleus; however, the involvement of caspases has been reported conflictingly. The chain is Protein FAM162A (FAM162A) from Pongo abelii (Sumatran orangutan).